The chain runs to 135 residues: Galectin-1 (135 aa).

Position 2 is an N-acetylalanine (alanine 2). Residues glycine 4 to glutamate 135 enclose the Galectin domain. 2 positions are modified to N6-acetyllysine: lysine 13 and lysine 29. The residue at position 30 (serine 30) is a Phosphoserine. Residues histidine 45–arginine 49, histidine 53, asparagine 62, and tryptophan 69–glutamate 72 contribute to the a beta-D-galactoside site. An N6-acetyllysine; alternate modification is found at lysine 108. Lysine 108 bears the N6-succinyllysine; alternate mark. Lysine 128 is modified (N6-acetyllysine).

In terms of assembly, homodimer. Binds LGALS3BP. Interacts with CD2, CD3, CD4, CD6, CD7, CD43, ALCAM and CD45. Interacts with laminin (via poly-N-acetyllactosamine). Interacts with SUSD2. Interacts with cargo receptor TMED10; the interaction mediates the translocation from the cytoplasm into the ERGIC (endoplasmic reticulum-Golgi intermediate compartment) and thereby secretion.

Its subcellular location is the secreted. It localises to the extracellular space. The protein resides in the extracellular matrix. It is found in the cytoplasm. Lectin that binds beta-galactoside and a wide array of complex carbohydrates. Plays a role in regulating apoptosis, cell proliferation and cell differentiation. Inhibits CD45 protein phosphatase activity and therefore the dephosphorylation of Lyn kinase. Strong inducer of T-cell apoptosis. The protein is Galectin-1 (LGALS1) of Bos taurus (Bovine).